The chain runs to 102 residues: RNA-binding protein Hfq (102 aa).

The Sm domain maps to 9–68 (DPFLNALRRERVPVSIYLVNGIKLQGQIESFDQFVILLKNTVSQMVYKHAISTVVPSRPV). The segment at 63-102 (VPSRPVSHHSNNAGGGASNNYHHGSNVQGSTAQQDSEETE) is disordered. Over residues 70–88 (HHSNNAGGGASNNYHHGSN) the composition is skewed to low complexity.

The protein belongs to the Hfq family. In terms of assembly, homohexamer.

In terms of biological role, RNA chaperone that binds small regulatory RNA (sRNAs) and mRNAs to facilitate mRNA translational regulation in response to envelope stress, environmental stress and changes in metabolite concentrations. Also binds with high specificity to tRNAs. The protein is RNA-binding protein Hfq of Salmonella choleraesuis (strain SC-B67).